The following is a 117-amino-acid chain: Elafin (117 aa).

Positions 1 to 22 are cleaved as a signal peptide; that stretch reads MRASSFLIVVVFLIAGTLVLEA. Positions 23–60 are excised as a propeptide; sequence AVTGVPVKGQDTVKGRVPFNGQDPVKGQVSVKGQDKVK. 2 SVP-1 clotting repeats span residues 29–54 and 55–72; these read VKGQDTVKGRVPFNGQDPVKGQVSVK and GQDKVKAQEPVKGPVSTK. The segment at 29–72 is 2 X tandem repeats of SVP-1 like motif; that stretch reads VKGQDTVKGRVPFNGQDPVKGQVSVKGQDKVKAQEPVKGPVSTK. A WAP domain is found at 69–117; it reads VSTKPGSCPIILIRCAMLNPPNRCLKDTDCPGIKKCCEGSCGMACFVPQ. 4 cysteine pairs are disulfide-bonded: Cys76-Cys105, Cys83-Cys109, Cys92-Cys104, and Cys98-Cys113.

The protein resides in the secreted. Neutrophil and pancreatic elastase-specific inhibitor of skin. It may prevent elastase-mediated tissue proteolysis. Has been shown to inhibit the alpha-4-beta-2/CHRNA2-CHRNB2 nicotinic acetylcholine receptor and to produce a weak inhibition on Kv11.1/KCNH2/ERG1 and on the transient receptor potential cation channel subfamily V member 1 (TRPV1). This Homo sapiens (Human) protein is Elafin (PI3).